The primary structure comprises 316 residues: Secondary metabolism regulator laeA (316 aa).

Belongs to the methyltransferase superfamily. LaeA methyltransferase family. In terms of assembly, component of the heterotrimeric velvet complex composed of laeA, veA and velB; VeA acting as a bridging protein between laeA and velB.

Its subcellular location is the nucleus. It carries out the reaction L-methionyl-[protein] + S-adenosyl-L-methionine = S-methyl-L-methionyl-[protein] + S-adenosyl-L-homocysteine. In terms of biological role, methyltransferase that performs automethylation. No other methyl-accepting substrate has been identified yet. Component of the velvet transcription factor complex that acts as a global regulator for secondary metabolite gene expression. Controls the biosynthetic gene cluster for beauvericin, a depsipeptide mycotoxin that functions as a virulence determinant. The velvet complex also regulates chromatin structure and transcription of siderophore biosynthetic genes and is required for infection of tomato plants. The velvet complex also governs expression of nitrate metabolism genes. This is Secondary metabolism regulator laeA from Fusarium oxysporum f. sp. lycopersici (strain 4287 / CBS 123668 / FGSC 9935 / NRRL 34936) (Fusarium vascular wilt of tomato).